The following is a 1310-amino-acid chain: Rho family-interacting cell polarization regulator 2 (1310 aa).

Ser123 and Ser178 each carry phosphoserine. The interval 196–254 (MHNLGHKNTNTPKEPQPKRVEEVYRALKNGLDEYLEFHQTELDKLTAQLKDMKRNSRLG) is involved in cell filopodia formation. The stretch at 224 to 253 (NGLDEYLEFHQTELDKLTAQLKDMKRNSRL) forms a coiled coil. Ser508 carries the post-translational modification Phosphoserine. The segment covering 588 to 608 (SSLSSQNEGTEDSSSASSRNS) has biased composition (polar residues). Positions 588-639 (SSLSSQNEGTEDSSSASSRNSLGEDHEPKSHSKSDTVEPKKPSVDARSGTES) are disordered. A compositionally biased stretch (basic and acidic residues) spans 609–631 (LGEDHEPKSHSKSDTVEPKKPSV). At Ser682 the chain carries Phosphoserine.

This sequence belongs to the RIPOR family. Homooligomer; homooligomerization is regulated by RHOC and leads to the formation of concatemers through the association of N- and C-termini. Interacts (phosphorylated form) with 14-3-3 proteins; these interactions occur during myogenic cell differentiation and also induces T cell proliferation arrest. Interacts (phosphorylated form) with HDAC6; this interaction occurs during early myogenic differentiation, prevents HDAC6 to deacetylate tubulin and also induces T cell proliferation arrest. Interacts with DYSF; this interaction occurs during early myogenic differentiation. Interacts with MYOF. Interacts (via active GTP- or inactive GDP-bound forms) with RHOA; this interaction is direct, blocks the loading of GTP to RHOA and decreases upon chemokine CCL19 stimulation in primary T lymphocytes. Interacts with RHOC. Interacts (via phosphorylated form) with YWHAB; this interaction occurs in a chemokine-dependent manner and does not compete for binding of RIPOR2 with RHOA nor blocks inhibition of RIPOR2-mediated RHOA activity. Interacts with YWHAE. Interacts with YWHAQ. Phosphorylated. Chemokine-induced phosphorylation in neutrophils occurs in a PKC- and AKT-dependent manner, resulting in RIPOR2 interaction with YWHAB and stabilization. Phosphorylated by PKCA, AKT1 and MAPKAPK1A; in vitro. As to expression, expressed in the cochlea (at protein level).

The protein localises to the cytoplasm. Its subcellular location is the cytoskeleton. The protein resides in the cell projection. It is found in the filopodium. It localises to the apical cell membrane. The protein localises to the stereocilium. Its subcellular location is the stereocilium membrane. Functionally, acts as an inhibitor of the small GTPase RHOA and plays several roles in the regulation of myoblast and hair cell differentiation, lymphocyte T proliferation and neutrophil polarization. Plays a role in fetal mononuclear myoblast differentiation by promoting filopodia and myotube formation. Maintains naive T lymphocytes in a quiescent state and prevents chemokine-induced T lymphocyte responses, such as cell adhesion, polarization and migration. Involved also in the regulation of neutrophil polarization, chemotaxis and adhesion. Required for normal development of inner and outer hair cell stereocilia within the cochlea of the inner ear. Plays a role for maintaining the structural organization of the basal domain of stereocilia. Involved in mechanosensory hair cell function. Required for normal hearing. This Rattus norvegicus (Rat) protein is Rho family-interacting cell polarization regulator 2.